The sequence spans 553 residues: CTP synthase (553 aa).

The interval methionine 1 to leucine 266 is amidoligase domain. Residue serine 12 participates in CTP binding. Residue serine 12 participates in UTP binding. Serine 13–valine 18 is an ATP binding site. An L-glutamine-binding site is contributed by tyrosine 53. Aspartate 70 serves as a coordination point for ATP. Mg(2+) contacts are provided by aspartate 70 and glutamate 140. CTP is bound by residues aspartate 147–glutamate 149, lysine 187–glutamine 192, and lysine 223. Residues lysine 187–glutamine 192 and lysine 223 each bind UTP. The region spanning threonine 291–serine 541 is the Glutamine amidotransferase type-1 domain. Glycine 353 is a binding site for L-glutamine. Cysteine 380 acts as the Nucleophile; for glutamine hydrolysis in catalysis. L-glutamine is bound by residues leucine 381–glutamine 384, glutamate 404, and arginine 464. Active-site residues include histidine 514 and glutamate 516.

This sequence belongs to the CTP synthase family. In terms of assembly, homotetramer.

It catalyses the reaction UTP + L-glutamine + ATP + H2O = CTP + L-glutamate + ADP + phosphate + 2 H(+). The enzyme catalyses L-glutamine + H2O = L-glutamate + NH4(+). It carries out the reaction UTP + NH4(+) + ATP = CTP + ADP + phosphate + 2 H(+). Its pathway is pyrimidine metabolism; CTP biosynthesis via de novo pathway; CTP from UDP: step 2/2. Its activity is regulated as follows. Allosterically activated by GTP, when glutamine is the substrate; GTP has no effect on the reaction when ammonia is the substrate. The allosteric effector GTP functions by stabilizing the protein conformation that binds the tetrahedral intermediate(s) formed during glutamine hydrolysis. Inhibited by the product CTP, via allosteric rather than competitive inhibition. Catalyzes the ATP-dependent amination of UTP to CTP with either L-glutamine or ammonia as the source of nitrogen. Regulates intracellular CTP levels through interactions with the four ribonucleotide triphosphates. The polypeptide is CTP synthase (Deinococcus geothermalis (strain DSM 11300 / CIP 105573 / AG-3a)).